The following is a 302-amino-acid chain: Phosphoribosylaminoimidazole-succinocarboxamide synthase (302 aa).

This sequence belongs to the SAICAR synthetase family.

It carries out the reaction 5-amino-1-(5-phospho-D-ribosyl)imidazole-4-carboxylate + L-aspartate + ATP = (2S)-2-[5-amino-1-(5-phospho-beta-D-ribosyl)imidazole-4-carboxamido]succinate + ADP + phosphate + 2 H(+). The protein operates within purine metabolism; IMP biosynthesis via de novo pathway; 5-amino-1-(5-phospho-D-ribosyl)imidazole-4-carboxamide from 5-amino-1-(5-phospho-D-ribosyl)imidazole-4-carboxylate: step 1/2. This Cupriavidus pinatubonensis (strain JMP 134 / LMG 1197) (Cupriavidus necator (strain JMP 134)) protein is Phosphoribosylaminoimidazole-succinocarboxamide synthase.